The sequence spans 777 residues: 5-methyltetrahydropteroyltriglutamate--homocysteine methyltransferase (777 aa).

Residues 17–20 and Lys132 each bind 5-methyltetrahydropteroyltri-L-glutamate; that span reads RELK. Residues 455 to 457 and Glu508 each bind L-homocysteine; that span reads IGS. Residues 455–457 and Glu508 each bind L-methionine; that span reads IGS. 5-methyltetrahydropteroyltri-L-glutamate contacts are provided by residues 539 to 540 and Trp585; that span reads RC. Residue Asp623 coordinates L-homocysteine. Asp623 contributes to the L-methionine binding site. Residue Glu629 participates in 5-methyltetrahydropteroyltri-L-glutamate binding. Residues His665, Cys667, and Glu689 each coordinate Zn(2+). The Proton donor role is filled by His718. Residue Cys750 coordinates Zn(2+).

The protein belongs to the vitamin-B12 independent methionine synthase family. Zn(2+) serves as cofactor.

The enzyme catalyses 5-methyltetrahydropteroyltri-L-glutamate + L-homocysteine = tetrahydropteroyltri-L-glutamate + L-methionine. It functions in the pathway amino-acid biosynthesis; L-methionine biosynthesis via de novo pathway; L-methionine from L-homocysteine (MetE route): step 1/1. Functionally, catalyzes the transfer of a methyl group from 5-methyltetrahydrofolate to homocysteine resulting in methionine formation. The protein is 5-methyltetrahydropteroyltriglutamate--homocysteine methyltransferase of Caulobacter vibrioides (strain ATCC 19089 / CIP 103742 / CB 15) (Caulobacter crescentus).